Consider the following 309-residue polypeptide: Protein FdhE homolog (309 aa).

This sequence belongs to the FdhE family.

Its subcellular location is the cytoplasm. In terms of biological role, necessary for formate dehydrogenase activity. The protein is Protein FdhE homolog of Enterobacter sp. (strain 638).